A 302-amino-acid chain; its full sequence is Surfeit locus protein 4 homolog (302 aa).

6 consecutive transmembrane segments (helical) span residues 95-115 (APLL…LVVF), 120-140 (AYAI…YGLI), 193-213 (VLLI…ISWT), 215-235 (ILVH…FKAK), 236-256 (FFAA…NSFW), and 271-291 (DFFQ…TGPG). Positions 299 to 302 (KKIY) match the Di-lysine motif motif.

It belongs to the SURF4 family.

It is found in the endoplasmic reticulum membrane. In Schizosaccharomyces pombe (strain 972 / ATCC 24843) (Fission yeast), this protein is Surfeit locus protein 4 homolog.